The following is a 410-amino-acid chain: Sporulation killing factor maturation protein SkfB (410 aa).

One can recognise a Radical SAM core domain in the interval 103–314; the sequence is SYLPISCTLQ…LREARHKWGD (212 aa). The [4Fe-4S] cluster site is built by cysteine 117, cysteine 121, cysteine 124, cysteine 380, cysteine 385, and cysteine 387.

This sequence belongs to the radical SAM superfamily. Requires [4Fe-4S] cluster as cofactor.

It localises to the cytoplasm. Functionally, catalyzes the formation of the thioether bond required for production of the sporulation killing factor (SKF) from SkfA. Forms the cysteine-methionine thioether bond found in SKF; the acceptor amino acid can be hydrophobic, aromatic or a small hydrophilic amino acid but not a larger hydrophilic amino acid, i.e. Met=Ala, Phe, Leu, Tyr&gt;Asn, Ser&gt;&gt;Gln, Glu, Lys. The relative position of Cys and Met in the substrate cannot be inverted, in vitro the thioether bond cannot be made in the absence of the SkfA propeptide, suggesting this is the first reaction in SKF maturation. In vitro, in the absence of a second substrate, cleaves S-adenosyl-L-methionine into Met and 5'-dA. In Bacillus subtilis (strain 168), this protein is Sporulation killing factor maturation protein SkfB.